Reading from the N-terminus, the 201-residue chain is MSLFAIFYLFLAYLLGSVSSAILLCRLAGLPDPRESGSHNPGATNVLRIGGRWVALSVLLFDMLKGMLPVWLGYYLGLTHFELGMVALGACLGHIFPIFFKFKGGKGVATAFGAIAPISWGVAGSMLGTWLLIFFVSGYSSLSAVMTALLVPFYVWWFKPEFTFPVALVCCLLIYRHHDNIQRLWRGQEDKVWNKLKNKKD.

The next 5 helical transmembrane spans lie at 3–23 (LFAIFYLFLAYLLGSVSSAIL), 53–73 (WVALSVLLFDMLKGMLPVWLG), 80–100 (HFELGMVALGACLGHIFPIFF), 115–135 (IAPISWGVAGSMLGTWLLIFF), and 153–175 (FYVWWFKPEFTFPVALVCCLLIY).

Belongs to the PlsY family. Probably interacts with PlsX.

Its subcellular location is the cell inner membrane. The catalysed reaction is an acyl phosphate + sn-glycerol 3-phosphate = a 1-acyl-sn-glycero-3-phosphate + phosphate. The protein operates within lipid metabolism; phospholipid metabolism. Its function is as follows. Catalyzes the transfer of an acyl group from acyl-phosphate (acyl-PO(4)) to glycerol-3-phosphate (G3P) to form lysophosphatidic acid (LPA). This enzyme utilizes acyl-phosphate as fatty acyl donor, but not acyl-CoA or acyl-ACP. This Pasteurella multocida (strain Pm70) protein is Glycerol-3-phosphate acyltransferase.